We begin with the raw amino-acid sequence, 96 residues long: Phosphoribosyl-ATP pyrophosphatase (96 aa).

Belongs to the PRA-PH family.

It is found in the cytoplasm. It carries out the reaction 1-(5-phospho-beta-D-ribosyl)-ATP + H2O = 1-(5-phospho-beta-D-ribosyl)-5'-AMP + diphosphate + H(+). It participates in amino-acid biosynthesis; L-histidine biosynthesis; L-histidine from 5-phospho-alpha-D-ribose 1-diphosphate: step 2/9. In Methanococcus aeolicus (strain ATCC BAA-1280 / DSM 17508 / OCM 812 / Nankai-3), this protein is Phosphoribosyl-ATP pyrophosphatase.